The following is an 803-amino-acid chain: Na(+)/H(+) antiporter subunit A1 (803 aa).

Transmembrane regions (helical) follow at residues 1–21 (MSLL…IPIL), 30–50 (LGWF…SLIS), 79–99 (LSIL…LYSI), 117–137 (LFMG…LYLF), 166–186 (LIIT…ISLA), 208–228 (FIFA…QVPF), 265–285 (LFAI…ITLF), 300–320 (ILAF…GIGA), 337–357 (FTAA…LFMI), 377–397 (LTIM…MAGI), 427–447 (LGIV…VYSI), 472–492 (ILML…GLFP), 522–542 (GITP…LLLL), 591–611 (LVII…SVPF), 621–641 (IHIY…MVVI), 646–666 (LFSV…FVFF), 671–691 (LALT…LCFY), 707–727 (LTNA…GLIA), and 764–784 (MDTL…YTMI).

The protein belongs to the CPA3 antiporters (TC 2.A.63) subunit A family. May form a heterooligomeric complex that consists of seven subunits: mnhA1, mnhB1, mnhC1, mnhD1, mnhE1, mnhF1 and mnhG1.

The protein resides in the cell membrane. Mnh complex is a Na(+)/H(+) antiporter involved in Na(+) excretion. The protein is Na(+)/H(+) antiporter subunit A1 (mnhA1) of Staphylococcus haemolyticus (strain JCSC1435).